We begin with the raw amino-acid sequence, 371 residues long: Putative 26S proteasome regulatory subunit homolog MJ1494 (371 aa).

161-168 (GPPGTGKT) is an ATP binding site.

Belongs to the AAA ATPase family.

The 26S proteasome is involved in the ATP-dependent degradation of ubiquitinated proteins. The regulatory (or ATPase) complex confers ATP dependency and substrate specificity to the 26S complex. The chain is Putative 26S proteasome regulatory subunit homolog MJ1494 from Methanocaldococcus jannaschii (strain ATCC 43067 / DSM 2661 / JAL-1 / JCM 10045 / NBRC 100440) (Methanococcus jannaschii).